We begin with the raw amino-acid sequence, 614 residues long: Lamin-2 (614 aa).

Over residues 1–10 the composition is skewed to basic residues; sequence MSAQVSKKRG. The segment at 1-51 is disordered; that stretch reads MSAQVSKKRGGSNPPKTGQHAASSTTSRTESSATSQTIYERQEVETRTQRT. The tract at residues 1–76 is head; it reads MSAQVSKKRG…GTAGLAGSPL (76 aa). Low complexity predominate over residues 21-37; the sequence is AASSTTSRTESSATSQT. The segment at 77-117 is coil 1A; the sequence is SRHQEKEEFKLLNNRFANYIDTIRAQQEEISVLRRKVETVS. Positions 81–433 constitute an IF rod domain; that stretch reads EKEEFKLLNN…ALLRTEEERL (353 aa). The interval 118–128 is linker 1; the sequence is SKEVVENQKIK. The interval 129–268 is coil 1B; sequence ERYNLEIANL…EEIVSLRNQR (140 aa). The segment at 269-286 is linker 2; that stretch reads RTEITEVETRMGEEYQSK. The segment at 287–426 is coil 2; that stretch reads IVEQLNDLRA…AELATYNALL (140 aa). A tail region spans residues 427–611; sequence RTEEERLNMK…ADSSDHQKNC (185 aa). The tract at residues 433–454 is disordered; the sequence is LNMKSPPFPSTPDSQRRGTKRR. The Nuclear localization signal motif lies at 449 to 458; it reads RGTKRRIADS. Positions 462 to 581 constitute an LTD domain; that stretch reads TRFRNEASAT…VARREMTQSS (120 aa). Cys-611 carries the S-farnesyl cysteine lipid modification. The propeptide at 612–614 is removed in mature form; that stretch reads VIM.

Belongs to the intermediate filament family.

The protein localises to the nucleus inner membrane. Functionally, intermediate filament (IF) protein, component of the nuclear lamina, a fibrous layer on the nucleoplasmic side of the inner nuclear membrane, which is thought to provide a framework for the nuclear envelope. The sequence is that of Lamin-2 from Hypsibius exemplaris (Freshwater tardigrade).